The chain runs to 628 residues: Leucine-rich repeat and fibronectin type-III domain-containing protein 3 (628 aa).

The signal sequence occupies residues Met1–Ala16. Residues Ser17–Thr540 are Extracellular-facing. An LRRNT domain is found at Pro19–Arg59. 7 LRR repeats span residues Arg60 to Thr83, Gly84 to Asp105, Ala108 to Gly129, Asn132 to Asp153, Thr157 to Arg178, Asn181 to Arg202, and Lys205 to Ser226. An LRRCT domain is found at Asn249 to Pro295. The 88-residue stretch at Pro295–Thr382 folds into the Ig-like domain. A disulfide bond links Cys317 and Cys366. Asn348 and Asn393 each carry an N-linked (GlcNAc...) asparagine glycan. The segment at Glu380–Val433 is disordered. The segment covering Pro410–Pro428 has biased composition (low complexity). A Fibronectin type-III domain is found at Pro427–Ala525. Residues Met541–Leu561 form a helical membrane-spanning segment. Residues Met562–Pro628 lie on the Cytoplasmic side of the membrane. The segment at Gln570–His609 is disordered. Polar residues predominate over residues Pro580–Gly590. A compositionally biased stretch (pro residues) spans Met595–Ser604.

It belongs to the LRFN family. In terms of assembly, can form heteromeric complexes with LRFN1, LRFN2, LRFN4 and LRFN5. Able to form homomeric complexes across cell junctions, between adjacent cells. Does not interact with DLG4. N-glycosylated.

It is found in the cell membrane. It localises to the cell projection. Its subcellular location is the axon. The protein resides in the dendrite. The protein localises to the synapse. It is found in the presynaptic cell membrane. It localises to the postsynaptic cell membrane. Cell adhesion molecule that mediates homophilic cell-cell adhesion in a Ca(2+)-independent manner. Promotes neurite outgrowth in hippocampal neurons. The protein is Leucine-rich repeat and fibronectin type-III domain-containing protein 3 (LRFN3) of Bos taurus (Bovine).